The sequence spans 1118 residues: Cytospin-A (1118 aa).

Disordered stretches follow at residues 1–63, 75–176, 294–324, and 359–391; these read MKKA…AGMA, KKST…NQIS, SLSP…GSVE, and SSDD…NASE. Residues 80-90 are compositionally biased toward low complexity; it reads SSAAPSAPAPA. The segment covering 93–117 has biased composition (polar residues); that stretch reads ISENKSKISTGTSSSAKRSTSAGNK. A compositionally biased stretch (basic and acidic residues) spans 120–131; that stretch reads SSTRERLRERTR. Residues 133 to 145 are compositionally biased toward polar residues; sequence NQSKKLPSVSQGA. Residues 158–171 are compositionally biased toward basic and acidic residues; it reads TAAEGDIRMSKSKS. Residues 168–281 are a coiled coil; sequence KSKSDNQISD…LNALGFSLEQ (114 aa). Positions 294-304 are enriched in polar residues; it reads SLSPEITPGNQ. Low complexity predominate over residues 359–373; the sequence is SSDDALDAPSSSESE. Residues S385, S386, and S390 each carry the phosphoserine modification. Coiled-coil stretches lie at residues 395–450 and 488–808; these read ACLT…MESL and RYME…RGRV. A phosphoserine mark is found at S869, S882, and S888. Residues 921–999 are disordered; it reads TSSTSRPASL…STRSRIREER (79 aa). Positions 947-957 are enriched in basic and acidic residues; sequence RSSEEMKRDIS. A compositionally biased stretch (low complexity) spans 972 to 992; the sequence is TTSPQLSLSSSPTASVTPSTR. Residues 1012–1117 form the Calponin-homology (CH) domain; it reads GSKRNALLKW…YVTAIYKYFE (106 aa).

Belongs to the cytospin-A family. As to quaternary structure, may interact with both microtubules and actin cytoskeleton.

It is found in the cytoplasm. It localises to the cytoskeleton. The protein localises to the spindle. Its subcellular location is the cell junction. The protein resides in the gap junction. Functionally, involved in cytokinesis and spindle organization. May play a role in actin cytoskeleton organization and microtubule stabilization and hence required for proper cell adhesion and migration. The protein is Cytospin-A (Specc1l) of Mus musculus (Mouse).